Consider the following 78-residue polypeptide: Small ribosomal subunit protein bS18 (78 aa).

Belongs to the bacterial ribosomal protein bS18 family. Part of the 30S ribosomal subunit. Forms a tight heterodimer with protein bS6.

Binds as a heterodimer with protein bS6 to the central domain of the 16S rRNA, where it helps stabilize the platform of the 30S subunit. This is Small ribosomal subunit protein bS18 from Acidothermus cellulolyticus (strain ATCC 43068 / DSM 8971 / 11B).